Reading from the N-terminus, the 1584-residue chain is Dicer-like protein 1 (1584 aa).

The disordered stretch occupies residues Glu-31 to Glu-60. One can recognise a Helicase ATP-binding domain in the interval Leu-129–Leu-310. Residue Leu-142–Thr-149 participates in ATP binding. The DEAH box signature appears at Asp-255–His-258. The Helicase C-terminal domain occupies Lys-448–Thr-621. In terms of domain architecture, Dicer dsRNA-binding fold spans Ser-654–Glu-744. In terms of domain architecture, PAZ spans Lys-894–Pro-1028. 2 consecutive RNase III domains span residues Val-1052–Gln-1207 and Ala-1258–Glu-1424. Mg(2+)-binding residues include Glu-1298, Asp-1410, and Glu-1413. Residues Thr-1458–Gly-1545 form the DRBM domain. Zn(2+) is bound by residues Cys-1470, His-1516, Cys-1557, and Cys-1559.

It belongs to the helicase family. Dicer subfamily. Mg(2+) serves as cofactor. The cofactor is Mn(2+).

Dicer-like endonuclease involved in cleaving double-stranded RNA in the RNA interference (RNAi) pathway. Produces 21 to 25 bp dsRNAs (siRNAs) which target the selective destruction of homologous RNAs leading to sequence-specific suppression of gene expression, called post-transcriptional gene silencing (PTGS). Part of a broad host defense response against viral infection and transposons. Controls the expression of the non-LTR retrotransposon Tad in the African strain, Adiomopoume. The protein is Dicer-like protein 1 (dcl-1) of Neurospora crassa (strain ATCC 24698 / 74-OR23-1A / CBS 708.71 / DSM 1257 / FGSC 987).